We begin with the raw amino-acid sequence, 467 residues long: UDP-N-acetylmuramate--L-alanine ligase (467 aa).

Residue 112–118 participates in ATP binding; that stretch reads GTHGKTT.

This sequence belongs to the MurCDEF family.

Its subcellular location is the cytoplasm. It catalyses the reaction UDP-N-acetyl-alpha-D-muramate + L-alanine + ATP = UDP-N-acetyl-alpha-D-muramoyl-L-alanine + ADP + phosphate + H(+). The protein operates within cell wall biogenesis; peptidoglycan biosynthesis. Cell wall formation. This Azoarcus sp. (strain BH72) protein is UDP-N-acetylmuramate--L-alanine ligase.